The primary structure comprises 616 residues: Chaperone protein HscA homolog (616 aa).

Belongs to the heat shock protein 70 family.

Chaperone involved in the maturation of iron-sulfur cluster-containing proteins. Has a low intrinsic ATPase activity which is markedly stimulated by HscB. The sequence is that of Chaperone protein HscA homolog from Aliivibrio fischeri (strain MJ11) (Vibrio fischeri).